We begin with the raw amino-acid sequence, 660 residues long: Bifunctional polymyxin resistance protein ArnA (660 aa).

The formyltransferase ArnAFT stretch occupies residues 1–304 (MKTVVFAYHD…TLGLVQGSRL (304 aa)). Residue 86 to 88 (HLI) participates in (6R)-10-formyltetrahydrofolate binding. Histidine 104 functions as the Proton donor; for formyltransferase activity in the catalytic mechanism. (6R)-10-formyltetrahydrofolate-binding positions include arginine 114 and 136 to 140 (VTRAD). Residues 314-660 (RRTRVLILGV…RTVDLTDKPS (347 aa)) are dehydrogenase ArnADH. NAD(+)-binding positions include aspartate 347 and 368–369 (DI). UDP-alpha-D-glucuronate-binding positions include alanine 393, tyrosine 398, and 432 to 433 (TS). The active-site Proton acceptor; for decarboxylase activity is glutamate 434. Residues arginine 460, asparagine 492, 526 to 535 (KLIDGGKQKR), and tyrosine 613 contribute to the UDP-alpha-D-glucuronate site. Arginine 619 (proton donor; for decarboxylase activity) is an active-site residue.

The protein in the N-terminal section; belongs to the Fmt family. UDP-L-Ara4N formyltransferase subfamily. It in the C-terminal section; belongs to the NAD(P)-dependent epimerase/dehydratase family. UDP-glucuronic acid decarboxylase subfamily. Homohexamer, formed by a dimer of trimers.

It carries out the reaction UDP-alpha-D-glucuronate + NAD(+) = UDP-beta-L-threo-pentopyranos-4-ulose + CO2 + NADH. The catalysed reaction is UDP-4-amino-4-deoxy-beta-L-arabinose + (6R)-10-formyltetrahydrofolate = UDP-4-deoxy-4-formamido-beta-L-arabinose + (6S)-5,6,7,8-tetrahydrofolate + H(+). It participates in nucleotide-sugar biosynthesis; UDP-4-deoxy-4-formamido-beta-L-arabinose biosynthesis; UDP-4-deoxy-4-formamido-beta-L-arabinose from UDP-alpha-D-glucuronate: step 1/3. Its pathway is nucleotide-sugar biosynthesis; UDP-4-deoxy-4-formamido-beta-L-arabinose biosynthesis; UDP-4-deoxy-4-formamido-beta-L-arabinose from UDP-alpha-D-glucuronate: step 3/3. It functions in the pathway bacterial outer membrane biogenesis; lipopolysaccharide biosynthesis. In terms of biological role, bifunctional enzyme that catalyzes the oxidative decarboxylation of UDP-glucuronic acid (UDP-GlcUA) to UDP-4-keto-arabinose (UDP-Ara4O) and the addition of a formyl group to UDP-4-amino-4-deoxy-L-arabinose (UDP-L-Ara4N) to form UDP-L-4-formamido-arabinose (UDP-L-Ara4FN). The modified arabinose is attached to lipid A and is required for resistance to polymyxin and cationic antimicrobial peptides. This chain is Bifunctional polymyxin resistance protein ArnA, found in Shigella dysenteriae serotype 1 (strain Sd197).